We begin with the raw amino-acid sequence, 183 residues long: Peptidyl-tRNA hydrolase (183 aa).

Tyr14 provides a ligand contact to tRNA. His19 serves as the catalytic Proton acceptor. The tRNA site is built by Tyr55 and Asn57.

This sequence belongs to the PTH family. As to quaternary structure, monomer.

The protein localises to the cytoplasm. The enzyme catalyses an N-acyl-L-alpha-aminoacyl-tRNA + H2O = an N-acyl-L-amino acid + a tRNA + H(+). Functionally, hydrolyzes ribosome-free peptidyl-tRNAs (with 1 or more amino acids incorporated), which drop off the ribosome during protein synthesis, or as a result of ribosome stalling. Its function is as follows. Catalyzes the release of premature peptidyl moieties from peptidyl-tRNA molecules trapped in stalled 50S ribosomal subunits, and thus maintains levels of free tRNAs and 50S ribosomes. This is Peptidyl-tRNA hydrolase from Thermus thermophilus (strain ATCC BAA-163 / DSM 7039 / HB27).